Consider the following 239-residue polypeptide: 1-(5-phosphoribosyl)-5-[(5-phosphoribosylamino)methylideneamino] imidazole-4-carboxamide isomerase (239 aa).

Residue aspartate 8 is the Proton acceptor of the active site. Residue aspartate 129 is the Proton donor of the active site.

This sequence belongs to the HisA/HisF family.

It is found in the cytoplasm. It carries out the reaction 1-(5-phospho-beta-D-ribosyl)-5-[(5-phospho-beta-D-ribosylamino)methylideneamino]imidazole-4-carboxamide = 5-[(5-phospho-1-deoxy-D-ribulos-1-ylimino)methylamino]-1-(5-phospho-beta-D-ribosyl)imidazole-4-carboxamide. The protein operates within amino-acid biosynthesis; L-histidine biosynthesis; L-histidine from 5-phospho-alpha-D-ribose 1-diphosphate: step 4/9. The chain is 1-(5-phosphoribosyl)-5-[(5-phosphoribosylamino)methylideneamino] imidazole-4-carboxamide isomerase from Cereibacter sphaeroides (strain ATCC 17025 / ATH 2.4.3) (Rhodobacter sphaeroides).